The chain runs to 607 residues: UvrABC system protein C (607 aa).

The GIY-YIG domain occupies 15-94; the sequence is ENPGVYLMKN…IKRHRPYFNV (80 aa). The 36-residue stretch at 204–239 folds into the UVR domain; the sequence is DQVLKLLIRLMNEASARLDYETAALRRDQIASIKEV.

The protein belongs to the UvrC family. As to quaternary structure, interacts with UvrB in an incision complex.

It localises to the cytoplasm. In terms of biological role, the UvrABC repair system catalyzes the recognition and processing of DNA lesions. UvrC both incises the 5' and 3' sides of the lesion. The N-terminal half is responsible for the 3' incision and the C-terminal half is responsible for the 5' incision. The chain is UvrABC system protein C from Dehalococcoides mccartyi (strain ATCC BAA-2100 / JCM 16839 / KCTC 5957 / BAV1).